The following is a 245-amino-acid chain: MIIPAIDLIDGKVVRLYQGDYGQQTTFDLSPLAQLQSYQDQGANWLHIVDLTGAKEPAKRQTTLIAKLTAGLSANIQVGGGIRTEEQVAELLSLGVKRVVIGSLAVKEPELVKGWFNKFGSEAICLALDVNINQSGEKIVAVSGWQSGGGKSLESIVEDFSQVGLKHALVTDISRDGTLTGANTELYRELSSRYPDIAWQASGGIATLEDVAAVRDSGAAGIIIGKALLINQFNVAEAIQCWPNE.

Asp-7 acts as the Proton acceptor in catalysis. The Proton donor role is filled by Asp-129.

This sequence belongs to the HisA/HisF family.

It localises to the cytoplasm. The enzyme catalyses 1-(5-phospho-beta-D-ribosyl)-5-[(5-phospho-beta-D-ribosylamino)methylideneamino]imidazole-4-carboxamide = 5-[(5-phospho-1-deoxy-D-ribulos-1-ylimino)methylamino]-1-(5-phospho-beta-D-ribosyl)imidazole-4-carboxamide. The protein operates within amino-acid biosynthesis; L-histidine biosynthesis; L-histidine from 5-phospho-alpha-D-ribose 1-diphosphate: step 4/9. The sequence is that of 1-(5-phosphoribosyl)-5-[(5-phosphoribosylamino)methylideneamino] imidazole-4-carboxamide isomerase from Shewanella sp. (strain MR-4).